Consider the following 459-residue polypeptide: Bifunctional protein GlmU (459 aa).

The tract at residues 1-230 is pyrophosphorylase; that stretch reads MVKRYAVILA…FEETIGVNDR (230 aa). Residues 9–12, Lys-23, Gln-73, and 78–79 contribute to the UDP-N-acetyl-alpha-D-glucosamine site; these read LAAG and GT. Position 103 (Asp-103) interacts with Mg(2+). Positions 140, 155, 170, and 228 each coordinate UDP-N-acetyl-alpha-D-glucosamine. Asn-228 lines the Mg(2+) pocket. The interval 231 to 251 is linker; it reads VALAEAEKIMRERICRKHMMN. The tract at residues 252-459 is N-acetyltransferase; sequence GVTIIDPAHT…VDRLSIKKNS (208 aa). Residues Arg-333 and Lys-351 each coordinate UDP-N-acetyl-alpha-D-glucosamine. His-363 functions as the Proton acceptor in the catalytic mechanism. The UDP-N-acetyl-alpha-D-glucosamine site is built by Tyr-366 and Asn-377. Acetyl-CoA-binding positions include 386-387, Ala-423, and Arg-440; that span reads NY.

In the N-terminal section; belongs to the N-acetylglucosamine-1-phosphate uridyltransferase family. The protein in the C-terminal section; belongs to the transferase hexapeptide repeat family. In terms of assembly, homotrimer. It depends on Mg(2+) as a cofactor.

The protein localises to the cytoplasm. It carries out the reaction alpha-D-glucosamine 1-phosphate + acetyl-CoA = N-acetyl-alpha-D-glucosamine 1-phosphate + CoA + H(+). The catalysed reaction is N-acetyl-alpha-D-glucosamine 1-phosphate + UTP + H(+) = UDP-N-acetyl-alpha-D-glucosamine + diphosphate. The protein operates within nucleotide-sugar biosynthesis; UDP-N-acetyl-alpha-D-glucosamine biosynthesis; N-acetyl-alpha-D-glucosamine 1-phosphate from alpha-D-glucosamine 6-phosphate (route II): step 2/2. Its pathway is nucleotide-sugar biosynthesis; UDP-N-acetyl-alpha-D-glucosamine biosynthesis; UDP-N-acetyl-alpha-D-glucosamine from N-acetyl-alpha-D-glucosamine 1-phosphate: step 1/1. It functions in the pathway bacterial outer membrane biogenesis; LPS lipid A biosynthesis. Its function is as follows. Catalyzes the last two sequential reactions in the de novo biosynthetic pathway for UDP-N-acetylglucosamine (UDP-GlcNAc). The C-terminal domain catalyzes the transfer of acetyl group from acetyl coenzyme A to glucosamine-1-phosphate (GlcN-1-P) to produce N-acetylglucosamine-1-phosphate (GlcNAc-1-P), which is converted into UDP-GlcNAc by the transfer of uridine 5-monophosphate (from uridine 5-triphosphate), a reaction catalyzed by the N-terminal domain. This Geobacillus sp. (strain WCH70) protein is Bifunctional protein GlmU.